Here is a 173-residue protein sequence, read N- to C-terminus: Large ribosomal RNA subunit accumulation protein YceD (173 aa).

The protein belongs to the DUF177 domain family.

Its function is as follows. Plays a role in synthesis, processing and/or stability of 23S rRNA. The polypeptide is Large ribosomal RNA subunit accumulation protein YceD (yceD) (Salmonella typhi).